We begin with the raw amino-acid sequence, 148 residues long: Lysozyme C (148 aa).

A signal peptide spans Met1–Gly18. Positions Lys19–Val148 constitute a C-type lysozyme domain. 4 disulfides stabilise this stretch: Cys24-Cys146, Cys48-Cys134, Cys83-Cys99, and Cys95-Cys113. Catalysis depends on residues Glu53 and Asp71.

Belongs to the glycosyl hydrolase 22 family. In terms of assembly, monomer.

It localises to the secreted. The enzyme catalyses Hydrolysis of (1-&gt;4)-beta-linkages between N-acetylmuramic acid and N-acetyl-D-glucosamine residues in a peptidoglycan and between N-acetyl-D-glucosamine residues in chitodextrins.. In terms of biological role, lysozymes have primarily a bacteriolytic function; those in tissues and body fluids are associated with the monocyte-macrophage system and enhance the activity of immunoagents. Also plays a role in digestion in this species. This is Lysozyme C (LYZ) from Semnopithecus entellus (Northern plains gray langur).